A 161-amino-acid chain; its full sequence is Ethylene-responsive transcription factor ERF070 (161 aa).

A disordered region spans residues 1 to 35 (MKRIIRISFTDAEATDSSSDEDTEERGGASQTRRR). The segment at residues 78–140 (KYRGVRQRPW…IGPHAPTNFG (63 aa)) is a DNA-binding region (AP2/ERF).

It belongs to the AP2/ERF transcription factor family. ERF subfamily.

It localises to the nucleus. Functionally, probably acts as a transcriptional activator. Binds to the GCC-box pathogenesis-related promoter element. May be involved in the regulation of gene expression by stress factors and by components of stress signal transduction pathways. This Arabidopsis thaliana (Mouse-ear cress) protein is Ethylene-responsive transcription factor ERF070 (ERF070).